The chain runs to 284 residues: 4-hydroxybenzoate octaprenyltransferase (284 aa).

7 helical membrane passes run 33-53 (VIAA…LGVF), 93-113 (IGLF…MNPL), 136-156 (HIPQ…AWAA), 159-179 (GELP…TIAY), 209-229 (LIIG…GQFY), 235-252 (YYWT…QQHL), and 264-284 (AFLN…VAFW).

This sequence belongs to the UbiA prenyltransferase family. Mg(2+) serves as cofactor.

Its subcellular location is the cell inner membrane. The catalysed reaction is all-trans-octaprenyl diphosphate + 4-hydroxybenzoate = 4-hydroxy-3-(all-trans-octaprenyl)benzoate + diphosphate. It functions in the pathway cofactor biosynthesis; ubiquinone biosynthesis. Its function is as follows. Catalyzes the prenylation of para-hydroxybenzoate (PHB) with an all-trans polyprenyl group. Mediates the second step in the final reaction sequence of ubiquinone-8 (UQ-8) biosynthesis, which is the condensation of the polyisoprenoid side chain with PHB, generating the first membrane-bound Q intermediate 3-octaprenyl-4-hydroxybenzoate. This chain is 4-hydroxybenzoate octaprenyltransferase, found in Vibrio parahaemolyticus serotype O3:K6 (strain RIMD 2210633).